The primary structure comprises 366 residues: Arfaptin-1 (366 aa).

The tract at residues 1 to 78 (MAEESPKNSA…SSAPPLPCVL (78 aa)) is disordered. Position 2 is an N-acetylalanine (alanine 2). Phosphoserine is present on serine 5. A compositionally biased stretch (basic and acidic residues) spans 22 to 35 (GDAHEHGYNRDLKH). A phosphoserine mark is found at serine 36 and serine 39. The span at 44–53 (SETQITSHGF) shows a compositional bias: polar residues. Residues serine 69, serine 79, and serine 125 each carry the phosphoserine modification. Positions 146 to 346 (TVDLELEAQI…NQKQLEQTLK (201 aa)) constitute an AH domain. Threonine 354 carries the post-translational modification Phosphothreonine.

Forms homodimers or heterodimers with ARFIP2. Interacts with non-myristoylated GTP-bound ARF3, but not to GDP-bound ARF3. Interacts with ARF1. Binds with lower affinity to ARF5 and with very little affinity to ARF6. Interacts with ARL1. Interacts with ATG9A.

It localises to the golgi apparatus. The protein resides in the trans-Golgi network membrane. In terms of biological role, plays a role in controlling biogenesis of secretory granules at the trans-Golgi network. Mechanistically, binds ARF-GTP at the neck of a growing secretory granule precursor and forms a protective scaffold. Once the granule precursor has been completely loaded, active PRKD1 phosphorylates ARFIP1 and releases it from ARFs. In turn, ARFs induce fission. Through this mechanism, ensures proper secretory granule formation at the Golgi of pancreatic beta cells. This is Arfaptin-1 from Rattus norvegicus (Rat).